A 71-amino-acid chain; its full sequence is Small ribosomal subunit protein bS18c (71 aa).

Belongs to the bacterial ribosomal protein bS18 family. In terms of assembly, part of the 30S ribosomal subunit.

The protein resides in the plastid. It localises to the cyanelle. The protein is Small ribosomal subunit protein bS18c (rps18) of Cyanophora paradoxa.